The chain runs to 262 residues: 1,2-epoxyphenylacetyl-CoA isomerase (262 aa).

It belongs to the enoyl-CoA hydratase/isomerase family.

It catalyses the reaction 2-(1,2-epoxy-1,2-dihydrophenyl)acetyl-CoA = 2-oxepin-2(3H)-ylideneacetyl-CoA. It participates in aromatic compound metabolism; phenylacetate degradation. Functionally, catalyzes the reversible conversion of the epoxide to 2-oxepin-2(3H)-ylideneacetyl-CoA (oxepin-CoA). This Escherichia coli (strain K12) protein is 1,2-epoxyphenylacetyl-CoA isomerase (paaG).